A 28-amino-acid polypeptide reads, in one-letter code: uncharacterized protein (28 aa).

Residues 1–18 (MLPRKYKPAYKKQAHRVK) are compositionally biased toward basic residues. The interval 1–28 (MLPRKYKPAYKKQAHRVKSNPQPAYTFQ) is disordered. The span at 19 to 28 (SNPQPAYTFQ) shows a compositional bias: polar residues.

This is an uncharacterized protein from Saccharomyces cerevisiae (strain ATCC 204508 / S288c) (Baker's yeast).